The primary structure comprises 905 residues: DNA-directed RNA polymerase subunit Rpo1N (905 aa).

Positions 60, 63, 70, 73, 100, 103, 147, and 150 each coordinate Zn(2+). Mg(2+) is bound by residues Asp461, Asp463, and Asp465.

The protein belongs to the RNA polymerase beta' chain family. In terms of assembly, part of the RNA polymerase complex. It depends on Mg(2+) as a cofactor. Requires Zn(2+) as cofactor.

It is found in the cytoplasm. It carries out the reaction RNA(n) + a ribonucleoside 5'-triphosphate = RNA(n+1) + diphosphate. In terms of biological role, DNA-dependent RNA polymerase (RNAP) catalyzes the transcription of DNA into RNA using the four ribonucleoside triphosphates as substrates. Forms the clamp head domain. The sequence is that of DNA-directed RNA polymerase subunit Rpo1N from Thermococcus celer.